The sequence spans 825 residues: Glycerol-3-phosphate acyltransferase 1, mitochondrial (825 aa).

Residues 1–87 (MDESALTLGT…FFNPSIPSLG (87 aa)) are Cytoplasmic-facing. The interval 80-120 (NPSIPSLGLRNVIYINETHTRHRGWLARRLSYVLFIQERDV) is important for mitochondrial localization. The stretch at 88–118 (LRNVIYINETHTRHRGWLARRLSYVLFIQER) is an intramembrane region. Residues 119-825 (DVHKGMFATN…LEYILSLVVL (707 aa)) lie on the Cytoplasmic side of the membrane. The HXXXXD motif signature appears at 230 to 235 (HRSHID). CoA is bound by residues arginine 278, arginine 279, lysine 288, arginine 293, and arginine 328. The residue at position 380 (serine 380) is a Phosphoserine. A disordered region spans residues 435 to 455 (SRPSGAADEGTDMSINESRNA). Arginine 461 contributes to the CoA binding site. Serine 685 and serine 692 each carry phosphoserine. An N6-acetyllysine mark is found at lysine 777 and lysine 781.

This sequence belongs to the GPAT/DAPAT family. In terms of tissue distribution, highly expressed in adipose tissues and lung. Low expression in liver.

It is found in the mitochondrion outer membrane. The enzyme catalyses sn-glycerol 3-phosphate + an acyl-CoA = a 1-acyl-sn-glycero-3-phosphate + CoA. It carries out the reaction (9Z,12Z)-octadecadienoyl-CoA + sn-glycerol 3-phosphate = 1-(9Z,12Z)-octadecadienoyl-sn-glycero-3-phosphate + CoA. The catalysed reaction is sn-glycerol 3-phosphate + (9Z)-octadecenoyl-CoA = 1-(9Z-octadecenoyl)-sn-glycero-3-phosphate + CoA. It catalyses the reaction sn-glycerol 3-phosphate + octadecanoyl-CoA = 1-octadecanoyl-sn-glycero-3-phosphate + CoA. The enzyme catalyses sn-glycerol 3-phosphate + hexadecanoyl-CoA = 1-hexadecanoyl-sn-glycero-3-phosphate + CoA. It carries out the reaction dodecanoyl-CoA + sn-glycerol 3-phosphate = 1-dodecanoyl-sn-glycerol 3-phosphate + CoA. The catalysed reaction is 1-acyl-sn-glycero-3-phospho-(1'-sn-glycerol) + an acyl-CoA = a 1,2-diacyl-sn-glycero-3-phospho-(1'-sn-glycerol) + CoA. Its pathway is phospholipid metabolism; CDP-diacylglycerol biosynthesis; CDP-diacylglycerol from sn-glycerol 3-phosphate: step 1/3. Functionally, mitochondrial membrane protein that catalyzes the essential first step of biosynthesis of glycerolipids such as triglycerides, phosphatidic acids and lysophosphatidic acids. Esterifies acyl-group from acyl-coenzyme A (acyl-CoA) to the sn-1 position of glycerol-3-phosphate, to produce lysophosphatidic acid. Has a narrow hydrophobic binding cleft that selects for a linear acyl chain. Catalytic activity is higher for substrates with a 16-carbon acyl chain. In Bos taurus (Bovine), this protein is Glycerol-3-phosphate acyltransferase 1, mitochondrial.